The primary structure comprises 1193 residues: Kinesin-related protein 3 (1193 aa).

The 327-residue stretch at 3–329 folds into the Kinesin motor domain; the sequence is SIRVVCRFRP…LRFGSRAKNI (327 aa). 85-92 is a binding site for ATP; sequence GQTGSGKT. Disordered regions lie at residues 377–429, 573–600, 611–630, 638–665, 973–1016, 1032–1114, and 1127–1193; these read KSSG…SSNV, SSIASLVPSTPKSSAEMDPLATASKHAD, LLQRTPSKAVGSSKSNTATS, ISESDNIGSGATTTTNNNNATITPATSS, GGGG…SANL, KAEP…PVKI, and FKKK…QQKD. Positions 405–429 are enriched in low complexity; sequence SSNLSNSVNSTSNLNTSSNTSSSNV. Residues 450 to 962 adopt a coiled-coil conformation; that stretch reads ELIKVLQEKC…SQVGVDAQNT (513 aa). 2 stretches are compositionally biased toward polar residues: residues 573–585 and 614–630; these read SSIASLVPSTPKS and RTPSKAVGSSKSNTATS. Composition is skewed to low complexity over residues 643–665 and 985–1006; these read NIGSGATTTTNNNNATITPATSS and HSSSSSTSSSSALNHSSINNNH. Residues 1007 to 1016 are compositionally biased toward polar residues; sequence TTPTPLSANL. Composition is skewed to low complexity over residues 1044–1078, 1086–1109, and 1132–1149; these read NTSIPSSPNHTSSNNINNNSNNNNNNNNNNNIGNS, NNNSSISNSNNNSSSNLNANLNGN, and PSSTPPSSTNNLSPQSPQ. Composition is skewed to polar residues over residues 1150 to 1165 and 1174 to 1193; these read TPSHLSADGSGNISPN and FSYTPAVVTSSTINKDQQKD.

The protein belongs to the TRAFAC class myosin-kinesin ATPase superfamily. Kinesin family. Kinesin subfamily. As to quaternary structure, dimer.

It is found in the cytoplasm. The protein localises to the cytoskeleton. Microtubule-associated force-producing protein that plays a role in organelle transport. Its motor activity is directed toward the microtubule's plus end. The maximal velocity in an inverted motility assay (moving microtubules on fixed motors) was 1.96 um/s. This Dictyostelium discoideum (Social amoeba) protein is Kinesin-related protein 3 (kif3).